The following is a 72-amino-acid chain: Hypotensin (72 aa).

Residues 1–24 (MKMMIAVFVSILLLMFSLSSTAMG) form the signal peptide. 2 consecutive propeptides follow at residues 25–35 (METEQQNMEER) and 61–72 (RFDPATFGENED).

The protein belongs to the non-disulfide-bridged peptide (NDBP) superfamily. Expressed by the venom gland.

The protein resides in the secreted. Its function is as follows. Potentiates the hypotensive action of bradykinin (BK) in normotensive rats, and induces a vasorelaxant effect in mesenteric artery rings that is induced by endothelium-dependent release of nitric oxide (NO). Does not inhibit angiotensin converting enzyme (ACE). Shows neither hemolytic activity nor cytotoxicity to normal and cancer cells. Shows moderate antimicrobial activity against the fungi Candida albicans and the filamentous fungus Trichophyton rubrum, as well as against the bacteria C.albicans (MIC=128 ug/mL), C.tropicalis (MIC=128 ug/mL) and Aspergillus flavus (MIC=128 ug/mL). Has no antimicrobial activity against S.aureus, S.epidermidis and P.aeruginosa. The polypeptide is Hypotensin (Tityus stigmurus (Brazilian scorpion)).